The chain runs to 305 residues: Superkiller complex protein 8 (305 aa).

Residue M1 is modified to N-acetylmethionine. T2 is subject to N-acetylthreonine; in WD repeat-containing protein 61, N-terminally processed. WD repeat units lie at residues 14 to 57 (AHDD…LELQ), 62 to 101 (GHQL…QMKS), 104 to 143 (AGPV…KEYS), 146 to 187 (TRGK…HTLE), 188 to 227 (GHAM…LAGT), 230 to 269 (GHAS…CIHT), and 272 to 305 (DHQD…DCPI).

This sequence belongs to the SKI8 family. Component of the PAF1 complex, which consists of CDC73, PAF1, LEO1, CTR9, RTF1 and SKIC8. The PAF1 complex interacts with PHF5A. Within the PAF1 complex interacts directly with PHF5A. Component of the SKI complex which consists of SKIC2, SKIC3 and SKIC8.

It is found in the nucleus. The protein resides in the cytoplasm. Component of the PAF1 complex (PAF1C) which has multiple functions during transcription by RNA polymerase II and is implicated in regulation of development and maintenance of embryonic stem cell pluripotency. PAF1C associates with RNA polymerase II through interaction with POLR2A CTD non-phosphorylated and 'Ser-2'- and 'Ser-5'-phosphorylated forms and is involved in transcriptional elongation, acting both independently and synergistically with TCEA1 and in cooperation with the DSIF complex and HTATSF1. PAF1C is required for transcription of Hox and Wnt target genes. PAF1C is involved in hematopoiesis and stimulates transcriptional activity of KMT2A/MLL1; it promotes leukemogenesis through association with KMT2A/MLL1-rearranged oncoproteins, such as KMT2A/MLL1-MLLT3/AF9 and KMT2A/MLL1-MLLT1/ENL. PAF1C is involved in histone modifications such as ubiquitination of histone H2B and methylation on histone H3 'Lys-4' (H3K4me3). PAF1C recruits the RNF20/40 E3 ubiquitin-protein ligase complex and the E2 enzyme UBE2A or UBE2B to chromatin which mediate monoubiquitination of 'Lys-120' of histone H2B (H2BK120ub1); UB2A/B-mediated H2B ubiquitination is proposed to be coupled to transcription. PAF1C is involved in mRNA 3' end formation probably through association with cleavage and poly(A) factors. In case of infection by influenza A strain H3N2, PAF1C associates with viral NS1 protein, thereby regulating gene transcription. Required for mono- and trimethylation on histone H3 'Lys-4' (H3K4me3), dimethylation on histone H3 'Lys-79' (H3K4me3). Required for Hox gene transcription. Also acts as a component of the SKI complex, a multiprotein complex that assists the RNA-degrading exosome during the mRNA decay and quality-control pathways. The SKI complex catalyzes mRNA extraction from 80S ribosomal complexes in the 3'-5' direction and channels mRNA to the cytosolic exosome for degradation. SKI-mediated extraction of mRNA from stalled ribosomes allow binding of the Pelota-HBS1L complex and subsequent ribosome disassembly by ABCE1 for ribosome recycling. The chain is Superkiller complex protein 8 (Skic8) from Rattus norvegicus (Rat).